The primary structure comprises 150 residues: MSGSMATAEASGSDGKGQEVETSVTYYRMEEVAKRNSLKELWLVIHGRVYDVTRFLNEHPGGEEVLLEQAGVDASESFEDVGHSSDAREMLKQYYIGDIHPSDLKPENGSKDPSKNDTCKSCWAYWILPIIGAVLLGFLYRYYTPESKSS.

A propeptide spanning residues 1–15 is cleaved from the precursor; sequence MSGSMATAEASGSDG. The tract at residues 1–21 is disordered; it reads MSGSMATAEASGSDGKGQEVE. Ser23 is subject to Phosphoserine. The region spanning 24 to 100 is the Cytochrome b5 heme-binding domain; sequence VTYYRMEEVA…LKQYYIGDIH (77 aa). The residue at position 34 (Lys34) is an N6-acetyllysine. Ser37 carries the phosphoserine modification. N6-methyllysine is present on Lys39. Heme contacts are provided by His59 and His83. Phosphoserine is present on Ser84. Residues 122–144 form a helical membrane-spanning segment; it reads CWAYWILPIIGAVLLGFLYRYYT.

This sequence belongs to the cytochrome b5 family. In terms of assembly, component of a complex composed of cytochrome b5, NADH-cytochrome b5 reductase (CYB5R3) and MTARC2.

The protein resides in the mitochondrion outer membrane. Cytochrome b5 is a membrane-bound hemoprotein functioning as an electron carrier for several membrane-bound oxygenases. In Pongo abelii (Sumatran orangutan), this protein is Cytochrome b5 type B (CYB5B).